A 273-amino-acid chain; its full sequence is Dermonecrotic toxin LdSicTox-alphaIB3aii (273 aa).

Histidine 5 is an active-site residue. Mg(2+) contacts are provided by glutamate 25 and aspartate 27. Histidine 41 acts as the Nucleophile in catalysis. Disulfide bonds link cysteine 45/cysteine 51 and cysteine 47/cysteine 190. Aspartate 85 contributes to the Mg(2+) binding site.

It belongs to the arthropod phospholipase D family. Class II subfamily. It depends on Mg(2+) as a cofactor. Expressed by the venom gland.

The protein localises to the secreted. The catalysed reaction is an N-(acyl)-sphingosylphosphocholine = an N-(acyl)-sphingosyl-1,3-cyclic phosphate + choline. The enzyme catalyses an N-(acyl)-sphingosylphosphoethanolamine = an N-(acyl)-sphingosyl-1,3-cyclic phosphate + ethanolamine. It catalyses the reaction a 1-acyl-sn-glycero-3-phosphocholine = a 1-acyl-sn-glycero-2,3-cyclic phosphate + choline. It carries out the reaction a 1-acyl-sn-glycero-3-phosphoethanolamine = a 1-acyl-sn-glycero-2,3-cyclic phosphate + ethanolamine. Its function is as follows. Dermonecrotic toxins cleave the phosphodiester linkage between the phosphate and headgroup of certain phospholipids (sphingolipid and lysolipid substrates), forming an alcohol (often choline) and a cyclic phosphate. This toxin acts on sphingomyelin (SM). It may also act on ceramide phosphoethanolamine (CPE), lysophosphatidylcholine (LPC) and lysophosphatidylethanolamine (LPE), but not on lysophosphatidylserine (LPS), and lysophosphatidylglycerol (LPG). It acts by transphosphatidylation, releasing exclusively cyclic phosphate products as second products. Induces dermonecrosis, hemolysis, increased vascular permeability, edema, inflammatory response, and platelet aggregation. In Loxosceles deserta (Desert recluse spider), this protein is Dermonecrotic toxin LdSicTox-alphaIB3aii.